The sequence spans 277 residues: Phosphate import ATP-binding protein PstB 2 (277 aa).

One can recognise an ABC transporter domain in the interval 31–272 (IEVPGLSLFY…PAKKQTEDYI (242 aa)). Residue 63-70 (GPSGCGKS) participates in ATP binding.

The protein belongs to the ABC transporter superfamily. Phosphate importer (TC 3.A.1.7) family. In terms of assembly, the complex is composed of two ATP-binding proteins (PstB), two transmembrane proteins (PstC and PstA) and a solute-binding protein (PstS).

The protein resides in the cell inner membrane. The catalysed reaction is phosphate(out) + ATP + H2O = ADP + 2 phosphate(in) + H(+). Its function is as follows. Part of the ABC transporter complex PstSACB involved in phosphate import. Responsible for energy coupling to the transport system. This is Phosphate import ATP-binding protein PstB 2 from Pseudomonas syringae pv. tomato (strain ATCC BAA-871 / DC3000).